Here is a 278-residue protein sequence, read N- to C-terminus: NH(3)-dependent NAD(+) synthetase (278 aa).

ATP is bound at residue 39–46 (GVSGGVDS). Mg(2+) is bound at residue Asp-45. Arg-121 contributes to the deamido-NAD(+) binding site. ATP is bound at residue Thr-141. Glu-146 is a Mg(2+) binding site. Deamido-NAD(+)-binding residues include Lys-154 and Asp-161. Positions 170 and 192 each coordinate ATP. 252 to 253 (HK) lines the deamido-NAD(+) pocket.

It belongs to the NAD synthetase family. Homodimer.

It catalyses the reaction deamido-NAD(+) + NH4(+) + ATP = AMP + diphosphate + NAD(+) + H(+). The protein operates within cofactor biosynthesis; NAD(+) biosynthesis; NAD(+) from deamido-NAD(+) (ammonia route): step 1/1. Catalyzes the ATP-dependent amidation of deamido-NAD to form NAD. Uses ammonia as a nitrogen source. The sequence is that of NH(3)-dependent NAD(+) synthetase from Saccharolobus solfataricus (strain ATCC 35092 / DSM 1617 / JCM 11322 / P2) (Sulfolobus solfataricus).